A 219-amino-acid chain; its full sequence is Agamous-like MADS-box protein AGL19 (219 aa).

An MADS-box domain is found at 1–61 (MVRGKTEMKR…SKLYEFSSSS (61 aa)). The interval 77–96 (GNNHKRNDNSQQARDETSGL) is disordered. The 91-residue stretch at 86–176 (SQQARDETSG…KEKWLGMGTA (91 aa)) folds into the K-box domain.

Interacts with SOC1 and AGL21. In terms of tissue distribution, mostly expressed in the outer layers of the root meristem (lateral root cap and epidermis) and in the central cylinder cells of mature roots. Also present in rosette leaves and seedlings and, to a lesser extent, in cauline leaves and flowers. Enriched in apices including the shoot apical meristem and developing leaf primordia.

It localises to the nucleus. Probable transcription factor that promotes flowering, especially in response to vernalization by short periods of cold, in an FLC-inpedendent manner. The protein is Agamous-like MADS-box protein AGL19 (AGL19) of Arabidopsis thaliana (Mouse-ear cress).